The chain runs to 199 residues: Recombination protein RecR (199 aa).

A C4-type zinc finger spans residues 57–72 (CQSCRTYTEETLCPIC). Residues 81–176 (STICVVETPA…MISRIAHGVP (96 aa)) form the Toprim domain.

This sequence belongs to the RecR family.

In terms of biological role, may play a role in DNA repair. It seems to be involved in an RecBC-independent recombinational process of DNA repair. It may act with RecF and RecO. In Shewanella putrefaciens (strain CN-32 / ATCC BAA-453), this protein is Recombination protein RecR.